We begin with the raw amino-acid sequence, 89 residues long: Small ribosomal subunit protein uS15 (89 aa).

This sequence belongs to the universal ribosomal protein uS15 family. In terms of assembly, part of the 30S ribosomal subunit. Forms a bridge to the 50S subunit in the 70S ribosome, contacting the 23S rRNA.

One of the primary rRNA binding proteins, it binds directly to 16S rRNA where it helps nucleate assembly of the platform of the 30S subunit by binding and bridging several RNA helices of the 16S rRNA. Functionally, forms an intersubunit bridge (bridge B4) with the 23S rRNA of the 50S subunit in the ribosome. The polypeptide is Small ribosomal subunit protein uS15 (Mycobacterium marinum (strain ATCC BAA-535 / M)).